A 508-amino-acid polypeptide reads, in one-letter code: MKFVLLLSLIGFCWAQYDPHTADGRTAIVHLFEWRWADIAKECERYLAPKGFGGVQVSPPNENIIINNPSRPWWERYQPISYKICSRSGNENEFKDMVTRCNNVGVRIYVDAVINHMCGSGNSAGTHSTCGSYFNPNNREFSAVPYSAWYFNDNKCNGEINNYNDANQVRNCRLSGLLDLALDKDYVRTKVADYMNNLIDIGVAGFRLDAAKHMWPGDIKAVLDKLHNLNTKWFSQGSRPFIFQEVIDLGGEAIKGSEYFGNGRVTEFKYGAKLGTVIRKWNGEKMSYLKNWGEGWGFVPTDRALVFVDNHDNQRGHGAGGASILTFWDARMYKMAVGFMLAHPYGFTRVMSSYRRTRNFQNGKDVNDWIGPPNNNGVTKEVTINPDTTCGNDWVCEHRWRQIRNMVAFRNVVNGQPFANWWDNGSNQVAFSRGNRGFIVFNNDDWALSSTLQTGLPAGTYCDVISGDKVNGNCTGLKVNVGSDGKAHFSISNSAEDPFIAIHADSKL.

The signal sequence occupies residues 1–15 (MKFVLLLSLIGFCWA). Q16 is subject to Pyrrolidone carboxylic acid. 3 cysteine pairs are disulfide-bonded: C43–C101, C85–C130, and C156–C172. Residues N115, R170, and D179 each coordinate Ca(2+). R207 is a binding site for chloride. The active-site Nucleophile is D209. A Ca(2+)-binding site is contributed by H213. E245 serves as the catalytic Proton donor. The chloride site is built by N310 and R349. Cystine bridges form between C390-C396 and C462-C474.

This sequence belongs to the glycosyl hydrolase 13 family. As to quaternary structure, monomer. Requires Ca(2+) as cofactor. Chloride is required as a cofactor.

The protein localises to the secreted. It localises to the extracellular space. The enzyme catalyses Endohydrolysis of (1-&gt;4)-alpha-D-glucosidic linkages in polysaccharides containing three or more (1-&gt;4)-alpha-linked D-glucose units.. The polypeptide is Pancreatic alpha-amylase (Amy2) (Rattus norvegicus (Rat)).